The following is a 490-amino-acid chain: MWWRRSRTNSLRYTVHPFASLQRSMIAPMDWTTIDACRTSTELPRPVEIRGWIRTRRDSKGGFSFLEVNDGTSLGNLQVVAPAELENYAEEIQKLTAGCSVVVQGELVESPAKGQSTELHASSVRVIGWCDGETYPLQKKRHSFEKLREWSHLRARTNTLGAVMRVRNRISQSIHRFFDDEGFNYLHTPIITASDCEGAGEMFRVTTLNLEKLAGSNRPFDTKQDFFQKPTHLTVSGQLEAETYATALSRVYTFGPTFRAENSNTSRHLAEFWMVEPEAAFYDLNDNMQLAERFLKRVFSDCLSHCGEDMDFFNERIEKGKIDQLKSVIEKPFEHMTYTDAVERLLACDEKFEYPVNWGTDLQAEHERYLTSVVGGPVILTDYPSSIKPFYMRVSDDGKTVAAMDVLVPGVGEIIGGSQREERLDVLQRRMAEGGLDESEYWWYVDLRRYGTVPHAGFGLGLERAVQYVTGMANIRDVIPFPRTPGNAEF.

It belongs to the class-II aminoacyl-tRNA synthetase family. As to quaternary structure, homodimer.

It is found in the cytoplasm. It carries out the reaction tRNA(Asn) + L-asparagine + ATP = L-asparaginyl-tRNA(Asn) + AMP + diphosphate + H(+). The sequence is that of Asparagine--tRNA ligase from Rhodopirellula baltica (strain DSM 10527 / NCIMB 13988 / SH1).